Reading from the N-terminus, the 309-residue chain is Ferredoxin--NADP reductase (309 aa).

Asp-25, Gln-33, Tyr-38, Val-77, Phe-107, Asp-267, and Thr-307 together coordinate FAD.

The protein belongs to the ferredoxin--NADP reductase type 2 family. In terms of assembly, homodimer. FAD serves as cofactor.

The catalysed reaction is 2 reduced [2Fe-2S]-[ferredoxin] + NADP(+) + H(+) = 2 oxidized [2Fe-2S]-[ferredoxin] + NADPH. The protein is Ferredoxin--NADP reductase of Lactobacillus acidophilus (strain ATCC 700396 / NCK56 / N2 / NCFM).